Consider the following 578-residue polypeptide: NADPH oxidase 4 (578 aa).

Topologically, residues 1 to 16 are cytoplasmic; it reads MALSWRSWLANEGVKH. The chain crosses the membrane as a helical span at residues 17-37; the sequence is LCLLVWLSLNVLLFWKTFLLY. Over 38 to 62 the chain is Extracellular; sequence NQGPEYYYIHQMLGLGLCLSRASAS. The region spanning 58–303 is the Ferric oxidoreductase domain; it reads RASASVLNLN…YCAERLYRCI (246 aa). Residues 63–83 form a helical membrane-spanning segment; that stretch reads VLNLNCSLILLPMCRTVLAYL. Over 84–104 the chain is Cytoplasmic; sequence RGSQKVPSRRTRRLLDKSKTL. The helical transmembrane segment at 105–125 threads the bilayer; sequence HITCGITICIFSGVHVAAHLV. Residues 126 to 154 are Extracellular-facing; that stretch reads NALNFSVNYSEHFLALNAARYQNEDPRKL. N-linked (GlcNAc...) asparagine glycosylation is present at Asn133. A helical membrane pass occupies residues 155 to 175; that stretch reads LFTTVPGLTGVCMVVVLFLMV. The Cytoplasmic segment spans residues 176 to 188; that stretch reads TASTYAIRVSNYD. The helical transmembrane segment at 189–209 threads the bilayer; sequence IFWYTHNLFFVFYMLLLLHVS. Topologically, residues 210–424 are extracellular; the sequence is GGLLKYQTNL…SPFEESLNYE (215 aa). Residues 218–273 are E-loop; essential for H2O2 generating catalytic activity; sequence NLDTHPPGCISLNRTPSQNMSIADYVSEHFHGSLPGGFSKLEDHYQKTLVKICLEE. The mediates interaction with TLR4 stretch occupies residues 248 to 575; sequence HGSLPGGFSK…YGTKFEYNKE (328 aa). In terms of domain architecture, FAD-binding FR-type spans 304 to 419; it reads RSNKPVTIIS…DGPFGSPFEE (116 aa). The helical transmembrane segment at 425–445 threads the bilayer; sequence VSLCVAGGIGVTPFASILNTL. The Cytoplasmic portion of the chain corresponds to 446–578; it reads LDDWKPYKLR…KFEYNKESFS (133 aa).

Interacts with TLR4. Interacts with, relocalizes and stabilizes CYBA/p22phox. Interacts with protein disulfide isomerase. Interacts with PPP1R15A. Interacts with LRRC8A; this interaction prevents the ubiquitin-mediated degradation of LRRC8A. Heme is required as a cofactor. N-glycosylation is required for the function. In terms of tissue distribution, expressed in vascular smooth muscle.

Its subcellular location is the cytoplasm. The protein resides in the endoplasmic reticulum membrane. The protein localises to the cell membrane. It is found in the cell junction. It localises to the focal adhesion. Its subcellular location is the nucleus. The catalysed reaction is NADPH + 2 O2 = 2 superoxide + NADP(+) + H(+). The enzyme catalyses NADPH + O2 + H(+) = H2O2 + NADP(+). Activated by insulin. Inhibited by diphenylene iodonium. Inhibited by plumbagin. Activated by phorbol 12-myristate 13-acetate (PMA). Functionally, NADPH oxidase that catalyzes predominantly the reduction of oxygen to H2O2. Can also catalyze to a smaller extent, the reduction of oxygen to superoxide. May function as an oxygen sensor regulating the KCNK3/TASK-1 potassium channel and HIF1A activity. May regulate insulin signaling cascade. May play a role in apoptosis, bone resorption and lipolysaccharide-mediated activation of NFKB. May produce superoxide in the nucleus and play a role in regulating gene expression upon cell stimulation. Promotes ferroptosis, reactive oxygen species production and reduced glutathione (GSH) levels by activating NLRP3 inflammasome activation and cytokine release. The protein is NADPH oxidase 4 (Nox4) of Rattus norvegicus (Rat).